A 347-amino-acid chain; its full sequence is Transcription factor EC (347 aa).

The necessary for transcriptional transactivation stretch occupies residues 1–119 (MTLDHQIINP…GLTSASCPSS (119 aa)). Positions 139–192 (QKKDNHNLIERRRRYNINYRIKELGTLIPKSNDPDMRWNKGTILKASVEYIKWL) constitute a bHLH domain. Residues 271-347 (PSPEFCDQAI…SFSSDDGDEL (77 aa)) form a necessary for transcriptional transactivation region. Residues 319–347 (DPLLSATSPAVSKESSRRSSFSSDDGDEL) are disordered. Over residues 326–341 (SPAVSKESSRRSSFSS) the composition is skewed to low complexity.

This sequence belongs to the MiT/TFE family. In terms of assembly, homodimer. Forms heterodimers with MITF and TFE3. Interacts with MITF.

It is found in the nucleus. In terms of biological role, transcriptional regulator that acts as a repressor or an activator. Acts as a transcriptional repressor on minimal promoter containing element F (that includes an E-box sequence). Binds to element F in an E-box sequence-specific manner. Acts as a transcriptional transactivator on the proximal promoter region of the tartrate-resistant acid phosphatase (TRAP) E-box containing promoter. Collaborates with MITF in target gene activation. Acts as a transcriptional repressor on minimal promoter containing mu E3 enhancer sequence. Binds to mu E3 DNA sequence of the immunoglobulin heavy-chain gene enhancer. Binds DNA in a homo- or heterodimeric form. The sequence is that of Transcription factor EC (TFEC) from Pan troglodytes (Chimpanzee).